We begin with the raw amino-acid sequence, 662 residues long: Biosynthetic arginine decarboxylase (662 aa).

Lys126 carries the N6-(pyridoxal phosphate)lysine modification. 308–318 (LNVGGGLGVDY) lines the substrate pocket.

Belongs to the Orn/Lys/Arg decarboxylase class-II family. SpeA subfamily. Requires Mg(2+) as cofactor. It depends on pyridoxal 5'-phosphate as a cofactor.

The enzyme catalyses L-arginine + H(+) = agmatine + CO2. Functionally, catalyzes the biosynthesis of agmatine from arginine. The chain is Biosynthetic arginine decarboxylase from Deinococcus radiodurans (strain ATCC 13939 / DSM 20539 / JCM 16871 / CCUG 27074 / LMG 4051 / NBRC 15346 / NCIMB 9279 / VKM B-1422 / R1).